We begin with the raw amino-acid sequence, 89 residues long: Long neurotoxin homolog Pa ID (89 aa).

A signal peptide spans 1–21 (MKTLLLTLVVVTIMCLDLGYT). Intrachain disulfides connect Cys-24/Cys-42, Cys-35/Cys-63, Cys-48/Cys-52, Cys-67/Cys-78, and Cys-79/Cys-84.

This sequence belongs to the three-finger toxin family. Long-chain subfamily. Type II alpha-neurotoxin sub-subfamily. Expressed by the venom gland.

It is found in the secreted. Functionally, binds with high affinity to muscular (alpha-1/CHRNA1) and neuronal (alpha-7/CHRNA7) nicotinic acetylcholine receptor (nAChR) and inhibits acetylcholine from binding to the receptor, thereby impairing neuromuscular and neuronal transmission. This Pseudechis australis (Mulga snake) protein is Long neurotoxin homolog Pa ID.